The following is a 321-amino-acid chain: Tetraacyldisaccharide 4'-kinase (321 aa).

Position 54-61 (54-61 (SVGGTGKT)) interacts with ATP.

This sequence belongs to the LpxK family.

The enzyme catalyses a lipid A disaccharide + ATP = a lipid IVA + ADP + H(+). It participates in glycolipid biosynthesis; lipid IV(A) biosynthesis; lipid IV(A) from (3R)-3-hydroxytetradecanoyl-[acyl-carrier-protein] and UDP-N-acetyl-alpha-D-glucosamine: step 6/6. Its function is as follows. Transfers the gamma-phosphate of ATP to the 4'-position of a tetraacyldisaccharide 1-phosphate intermediate (termed DS-1-P) to form tetraacyldisaccharide 1,4'-bis-phosphate (lipid IVA). This Rickettsia bellii (strain OSU 85-389) protein is Tetraacyldisaccharide 4'-kinase.